The following is a 147-amino-acid chain: Antiholin-like protein LrgA (147 aa).

Helical transmembrane passes span 12–32, 35–55, 74–94, and 98–118; these read PAHF…SKII, FMPI…VLLC, NIGL…GVIS, and FLII…TGYV.

It belongs to the CidA/LrgA family. LrgA subfamily.

It is found in the cell membrane. Inhibits the expression or activity of extracellular murein hydrolases by interacting, possibly with LrgB, with the holin-like proteins CidA and/or CidB. The LrgAB and CidAB proteins may affect the proton motive force of the membrane. May be involved in programmed cell death (PCD), possibly triggering PCD in response to antibiotics and environmental stresses. This Staphylococcus aureus (strain USA300) protein is Antiholin-like protein LrgA.